Consider the following 748-residue polypeptide: Probable transcriptional regulator SLK1 (748 aa).

Disordered regions lie at residues 67–93 (QHLP…RENN) and 138–163 (QQRL…QQQQ). The span at 71-81 (QQQQQQLLQQQ) shows a compositional bias: low complexity. The segment at 204–451 (PAENCITYWR…EQKIGPIEGL (248 aa)) is dimerization. A Nuclear localization signal motif is present at residues 213–227 (RKFVAEYFSPRAKQR). The span at 572–587 (NAMNNPNSNTGKQEGF) shows a compositional bias: polar residues. 2 disordered regions span residues 572–653 (NAMN…GNTP) and 667–712 (ENGG…NNSF). The segment covering 588 to 606 (SSQNPTPNSNQSPSSSSQQ) has biased composition (low complexity). Residues 615-653 (FPNSPQMQQQQRTMNGPTNILPQNHPHQLQSPHSHGNTP) are compositionally biased toward polar residues. Low complexity predominate over residues 667-686 (ENGGSVQQQQAFSGQSGSNS). Positions 687–699 (NAERNTTASTSNI) are enriched in polar residues.

The protein belongs to the adn1/SEU family. Forms corepressor complexes with LUH; LUH is the transcription repressor subunit and SLK1 the specific DNA-binding adapters. As to expression, expressed in young flower meristems, ovules and the carpel margin meristem.

It is found in the nucleus. In terms of biological role, probable transcription regulator that functions in the development of the carpel margin meristem similarly to SEUSS (SEU). In association with SEU, supports organ development from meristematic regions by facilitating auxin response and thus organ initiation, and by sustaining meristematic potential through the maintenance of PHABULOSA expression. DNA-binding adapter subunit of the SEU-SLK1 transcriptional corepressor of abiotic stress (e.g. salt and osmotic stress) response genes. This is Probable transcriptional regulator SLK1 (SLK1) from Arabidopsis thaliana (Mouse-ear cress).